The primary structure comprises 151 residues: Large ribosomal subunit protein uL15 (151 aa).

Residues 1-58 are disordered; sequence MELNQLKSVPKARNHKTKTLGRGHGSGLGKTSGRGQKGQKARKSGLTRPGFEGGQTPL. Residues 10 to 21 show a composition bias toward basic residues; sequence PKARNHKTKTLG. A compositionally biased stretch (gly residues) spans 22-36; sequence RGHGSGLGKTSGRGQ.

The protein belongs to the universal ribosomal protein uL15 family. As to quaternary structure, part of the 50S ribosomal subunit.

In terms of biological role, binds to the 23S rRNA. The sequence is that of Large ribosomal subunit protein uL15 from Mycoplasma pneumoniae (strain ATCC 29342 / M129 / Subtype 1) (Mycoplasmoides pneumoniae).